The chain runs to 320 residues: Glutathione synthetase (320 aa).

In terms of domain architecture, ATP-grasp spans 133 to 317 (KMYTLQFAAV…LGEKVICWLE (185 aa)). 159–215 (LEEHGAAVLKPLGGKAGEGILFLDPGDRNFNSLVEISTQHGKEPVMVQRFLPEAKEG) contacts ATP. The Mg(2+) site is built by Glu288 and Asn290.

It belongs to the prokaryotic GSH synthase family. It depends on Mg(2+) as a cofactor. Mn(2+) serves as cofactor.

It catalyses the reaction gamma-L-glutamyl-L-cysteine + glycine + ATP = glutathione + ADP + phosphate + H(+). The protein operates within sulfur metabolism; glutathione biosynthesis; glutathione from L-cysteine and L-glutamate: step 2/2. This Synechocystis sp. (strain ATCC 27184 / PCC 6803 / Kazusa) protein is Glutathione synthetase.